We begin with the raw amino-acid sequence, 229 residues long: Large ribosomal subunit protein uL1 (229 aa).

The protein belongs to the universal ribosomal protein uL1 family. In terms of assembly, part of the 50S ribosomal subunit.

Functionally, binds directly to 23S rRNA. The L1 stalk is quite mobile in the ribosome, and is involved in E site tRNA release. Protein L1 is also a translational repressor protein, it controls the translation of the L11 operon by binding to its mRNA. The protein is Large ribosomal subunit protein uL1 of Histophilus somni (strain 2336) (Haemophilus somnus).